Consider the following 173-residue polypeptide: UPF0316 protein Bsph_0745 (173 aa).

The next 3 membrane-spanning stretches (helical) occupy residues 4-24, 31-51, and 58-78; these read IVLI…RTIF, FLAA…LSLV, and MLAM…GAKI.

Belongs to the UPF0316 family.

Its subcellular location is the cell membrane. This is UPF0316 protein Bsph_0745 from Lysinibacillus sphaericus (strain C3-41).